A 779-amino-acid polypeptide reads, in one-letter code: Phosphoribosylformylglycinamidine synthase subunit PurL (779 aa).

Residue His52 is part of the active site. The ATP site is built by Tyr55 and Lys94. Glu96 is a binding site for Mg(2+). Substrate contacts are provided by residues 97–100 (SHNH) and Arg119. His98 (proton acceptor) is an active-site residue. Residue Asp120 coordinates Mg(2+). Gln243 is a binding site for substrate. Mg(2+) is bound at residue Asp271. A substrate-binding site is contributed by 315-317 (ESQ). ATP contacts are provided by Asn523 and Gly560. Asn561 is a binding site for Mg(2+). Ser563 contacts substrate.

This sequence belongs to the FGAMS family. In terms of assembly, monomer. Part of the FGAM synthase complex composed of 1 PurL, 1 PurQ and 2 PurS subunits.

It localises to the cytoplasm. The catalysed reaction is N(2)-formyl-N(1)-(5-phospho-beta-D-ribosyl)glycinamide + L-glutamine + ATP + H2O = 2-formamido-N(1)-(5-O-phospho-beta-D-ribosyl)acetamidine + L-glutamate + ADP + phosphate + H(+). The protein operates within purine metabolism; IMP biosynthesis via de novo pathway; 5-amino-1-(5-phospho-D-ribosyl)imidazole from N(2)-formyl-N(1)-(5-phospho-D-ribosyl)glycinamide: step 1/2. Part of the phosphoribosylformylglycinamidine synthase complex involved in the purines biosynthetic pathway. Catalyzes the ATP-dependent conversion of formylglycinamide ribonucleotide (FGAR) and glutamine to yield formylglycinamidine ribonucleotide (FGAM) and glutamate. The FGAM synthase complex is composed of three subunits. PurQ produces an ammonia molecule by converting glutamine to glutamate. PurL transfers the ammonia molecule to FGAR to form FGAM in an ATP-dependent manner. PurS interacts with PurQ and PurL and is thought to assist in the transfer of the ammonia molecule from PurQ to PurL. This is Phosphoribosylformylglycinamidine synthase subunit PurL from Prochlorococcus marinus (strain MIT 9301).